We begin with the raw amino-acid sequence, 575 residues long: Kelch repeat and BTB domain-containing protein 8 (575 aa).

Residues 23 to 91 (TDIVVEVDHG…AYTSRVILTE (69 aa)) form the BTB domain. The region spanning 126 to 228 (SIGVFIFADH…MEDAFIEKIP (103 aa)) is the BACK domain. Kelch repeat units lie at residues 310-364 (DIYI…YCCG), 365-415 (KMYA…EHKE), 417-455 (IYVL…VYKD), 457-506 (IYYI…LFQN), and 516-562 (QVTV…FECA).

It belongs to the KBTBD8 family. Component of the BCR(KBTBD8) E3 ubiquitin ligase complex, at least composed of CUL3, KBTBD8 and RBX1.

It localises to the cytoplasm. It is found in the cytoskeleton. The protein localises to the spindle. The protein resides in the golgi apparatus. Substrate-specific adapter of a BCR (BTB-CUL3-RBX1) E3 ubiquitin ligase complex that acts as a regulator of neural crest specification. The BCR(KBTBD8) complex acts by mediating monoubiquitination of NOLC1 and TCOF1: monoubiquitination promotes the formation of a NOLC1-TCOF1 complex that acts as a platform to connect RNA polymerase I with enzymes responsible for ribosomal processing and modification, leading to remodel the translational program of differentiating cells in favor of neural crest specification. This chain is Kelch repeat and BTB domain-containing protein 8, found in Rattus norvegicus (Rat).